A 360-amino-acid chain; its full sequence is Histidinol-phosphate aminotransferase (360 aa).

Residue Lys223 is modified to N6-(pyridoxal phosphate)lysine.

Belongs to the class-II pyridoxal-phosphate-dependent aminotransferase family. Histidinol-phosphate aminotransferase subfamily. Homodimer. The cofactor is pyridoxal 5'-phosphate.

The catalysed reaction is L-histidinol phosphate + 2-oxoglutarate = 3-(imidazol-4-yl)-2-oxopropyl phosphate + L-glutamate. It participates in amino-acid biosynthesis; L-histidine biosynthesis; L-histidine from 5-phospho-alpha-D-ribose 1-diphosphate: step 7/9. The protein is Histidinol-phosphate aminotransferase of Bacillus velezensis (strain DSM 23117 / BGSC 10A6 / LMG 26770 / FZB42) (Bacillus amyloliquefaciens subsp. plantarum).